Reading from the N-terminus, the 206-residue chain is Large ribosomal subunit protein uL22m (206 aa).

Residues 1-40 (MAAAVLGQLGALWIHNLRSRGRLAWGVLPQSYVHTSASLD) constitute a mitochondrion transit peptide.

The protein belongs to the universal ribosomal protein uL22 family. As to quaternary structure, component of the mitochondrial ribosome large subunit (39S) which comprises a 16S rRNA and about 50 distinct proteins.

It is found in the mitochondrion. The polypeptide is Large ribosomal subunit protein uL22m (MRPL22) (Pongo abelii (Sumatran orangutan)).